The primary structure comprises 816 residues: Probable E3 ubiquitin-protein ligase hulA (816 aa).

Residues 1–112 (MGSNLPAQPN…QMGGDEMLTR (112 aa)) form the C2 domain. Disordered regions lie at residues 134–238 (NLST…WERR) and 253–353 (RTTT…YFVD). Composition is skewed to polar residues over residues 151–168 (MQPS…ASTP), 177–202 (ADPT…STIV), 217–226 (SRTNLSSFED), and 253–270 (RTTT…QTSR). The WW 1 domain occupies 229 to 262 (GRLPAGWERREDNLGRTYYVDHNTRTTTWTRPSN). The segment covering 279 to 294 (LERRAHQSRMLPEDRT) has biased composition (basic and acidic residues). Residues 295-309 (GASSPNLQENQQQAQ) show a composition bias toward polar residues. Residues 310–333 (TPPAGGSASAVSMMATGATTAGTG) are compositionally biased toward low complexity. 2 WW domains span residues 333–366 (GELP…DPRR) and 393–426 (GPLP…DPRL). An HECT domain is found at 482-816 (SASDLKKRLM…VEETLGFGQE (335 aa)). The Glycyl thioester intermediate role is filled by cysteine 784.

This sequence belongs to the RSP5/NEDD4 family. Interacts with creD.

It localises to the cytoplasm. It catalyses the reaction S-ubiquitinyl-[E2 ubiquitin-conjugating enzyme]-L-cysteine + [acceptor protein]-L-lysine = [E2 ubiquitin-conjugating enzyme]-L-cysteine + N(6)-ubiquitinyl-[acceptor protein]-L-lysine.. Its pathway is protein modification; protein ubiquitination. In terms of biological role, E3 ubiquitin-protein ligase which accepts ubiquitin from an E2 ubiquitin-conjugating enzyme in the form of a thioester and then directly transfers the ubiquitin to targeted substrates. Probably involved in the regulatory network controlling carbon source utilization. The chain is Probable E3 ubiquitin-protein ligase hulA (hulA) from Aspergillus oryzae (strain ATCC 42149 / RIB 40) (Yellow koji mold).